The sequence spans 738 residues: Squalene hopane cyclase afumA (738 aa).

PFTB repeat units lie at residues 132–173 (GSQY…RIIG) and 321–361 (RRRC…KLHD). Asp460 acts as the Proton donor in catalysis. PFTB repeat units lie at residues 482 to 523 (VRDA…ESLC), 581 to 621 (CARA…QYFK), and 634 to 675 (AARA…SQTA).

It belongs to the terpene cyclase/mutase family.

The protein operates within secondary metabolite biosynthesis. Its function is as follows. Squalene hopane cyclase; part of the gene cluster that mediates the biosynthesis fumihopaside A, a hopane-type glucoside that enhances the thermotolerance and UV resistance of N.fumigata. The first step of fumihopaside A biosynthesis is performed by the squalene hopane cyclase afumA that catalyzes the cyclization of 3S-oxidosqualene into the hopene 21-beta-H-hopane-3-beta,22-diol. The cytochrome P450 monooxygenase afumB is responsible for both hydroxylation at C-24 and oxidations at C-30 of the afumA product. The glycosyltransferase afumC then catalyzes the glycosylation at C-24, using UDP-D-glucose as a donor, to produce fumihopaside A. AfumC is also able to accept UDP-D-galactose and UDP-D-glucuronic acid as donors to yield minor derivatives. Fumihopaside B, another minor derivative produced, is different from fumihopaside A due to the presence of a double bond between C-22 and C-29. This is Squalene hopane cyclase afumA from Aspergillus fumigatus (strain CBS 144.89 / FGSC A1163 / CEA10) (Neosartorya fumigata).